Consider the following 328-residue polypeptide: Phenylalanine--tRNA ligase alpha subunit (328 aa).

Residue glutamate 245 coordinates Mg(2+).

Belongs to the class-II aminoacyl-tRNA synthetase family. Phe-tRNA synthetase alpha subunit type 1 subfamily. As to quaternary structure, tetramer of two alpha and two beta subunits. The cofactor is Mg(2+).

Its subcellular location is the cytoplasm. The catalysed reaction is tRNA(Phe) + L-phenylalanine + ATP = L-phenylalanyl-tRNA(Phe) + AMP + diphosphate + H(+). In Helicobacter pylori (strain Shi470), this protein is Phenylalanine--tRNA ligase alpha subunit.